A 367-amino-acid chain; its full sequence is tRNA(Ile)-lysidine synthase, chloroplastic (367 aa).

64–69 serves as a coordination point for ATP; it reads SGGQDS.

The protein belongs to the tRNA(Ile)-lysidine synthase family.

It is found in the plastid. It localises to the chloroplast. The enzyme catalyses cytidine(34) in tRNA(Ile2) + L-lysine + ATP = lysidine(34) in tRNA(Ile2) + AMP + diphosphate + H(+). In terms of biological role, ligates lysine onto the cytidine present at position 34 of the AUA codon-specific tRNA(Ile) that contains the anticodon CAU, in an ATP-dependent manner. Cytidine is converted to lysidine, thus changing the amino acid specificity of the tRNA from methionine to isoleucine. This chain is tRNA(Ile)-lysidine synthase, chloroplastic, found in Nephroselmis olivacea (Green alga).